Consider the following 452-residue polypeptide: Bifunctional protein GlmU (452 aa).

Residues 1–226 (MNFSAVILAA…PIEVEGVNDR (226 aa)) form a pyrophosphorylase region. Residues 8–11 (LAAG), Lys22, Gln73, 78–79 (GT), 100–102 (YGD), Gly137, Glu151, Asn166, and Asn224 contribute to the UDP-N-acetyl-alpha-D-glucosamine site. Asp102 is a Mg(2+) binding site. Residue Asn224 coordinates Mg(2+). The tract at residues 227–247 (AQLARLERAYQAAQAQKLLEQ) is linker. Residues 248–452 (GVMLRDPSRF…IANWQRPTKK (205 aa)) form an N-acetyltransferase region. 2 residues coordinate UDP-N-acetyl-alpha-D-glucosamine: Arg330 and Lys348. His360 functions as the Proton acceptor in the catalytic mechanism. UDP-N-acetyl-alpha-D-glucosamine-binding residues include Tyr363 and Asn374. Acetyl-CoA contacts are provided by residues Ala377, 383–384 (NY), Ser402, Ala420, and Arg437.

In the N-terminal section; belongs to the N-acetylglucosamine-1-phosphate uridyltransferase family. It in the C-terminal section; belongs to the transferase hexapeptide repeat family. Homotrimer. Mg(2+) serves as cofactor.

It localises to the cytoplasm. It carries out the reaction alpha-D-glucosamine 1-phosphate + acetyl-CoA = N-acetyl-alpha-D-glucosamine 1-phosphate + CoA + H(+). The enzyme catalyses N-acetyl-alpha-D-glucosamine 1-phosphate + UTP + H(+) = UDP-N-acetyl-alpha-D-glucosamine + diphosphate. It functions in the pathway nucleotide-sugar biosynthesis; UDP-N-acetyl-alpha-D-glucosamine biosynthesis; N-acetyl-alpha-D-glucosamine 1-phosphate from alpha-D-glucosamine 6-phosphate (route II): step 2/2. The protein operates within nucleotide-sugar biosynthesis; UDP-N-acetyl-alpha-D-glucosamine biosynthesis; UDP-N-acetyl-alpha-D-glucosamine from N-acetyl-alpha-D-glucosamine 1-phosphate: step 1/1. It participates in bacterial outer membrane biogenesis; LPS lipid A biosynthesis. Catalyzes the last two sequential reactions in the de novo biosynthetic pathway for UDP-N-acetylglucosamine (UDP-GlcNAc). The C-terminal domain catalyzes the transfer of acetyl group from acetyl coenzyme A to glucosamine-1-phosphate (GlcN-1-P) to produce N-acetylglucosamine-1-phosphate (GlcNAc-1-P), which is converted into UDP-GlcNAc by the transfer of uridine 5-monophosphate (from uridine 5-triphosphate), a reaction catalyzed by the N-terminal domain. The sequence is that of Bifunctional protein GlmU from Aliivibrio fischeri (strain MJ11) (Vibrio fischeri).